A 402-amino-acid polypeptide reads, in one-letter code: Argininosuccinate synthase (402 aa).

7-15 (LYSGGLDTS) lines the ATP pocket. Tyrosine 83 contacts L-citrulline. ATP is bound at residue glycine 113. L-aspartate is bound by residues threonine 115, asparagine 119, and aspartate 120. Asparagine 119 contacts L-citrulline. Positions 123, 169, 178, 253, and 265 each coordinate L-citrulline.

This sequence belongs to the argininosuccinate synthase family. Type 1 subfamily. As to quaternary structure, homotetramer.

Its subcellular location is the cytoplasm. It carries out the reaction L-citrulline + L-aspartate + ATP = 2-(N(omega)-L-arginino)succinate + AMP + diphosphate + H(+). Its pathway is amino-acid biosynthesis; L-arginine biosynthesis; L-arginine from L-ornithine and carbamoyl phosphate: step 2/3. The chain is Argininosuccinate synthase from Thermoplasma acidophilum (strain ATCC 25905 / DSM 1728 / JCM 9062 / NBRC 15155 / AMRC-C165).